A 173-amino-acid chain; its full sequence is Peptidoglycan-associated lipoprotein (173 aa).

Residues 1–21 form the signal peptide; that stretch reads MQLNKVLKGLMIALPVMAIAA. Residue cysteine 22 is the site of N-palmitoyl cysteine attachment. A lipid anchor (S-diacylglycerol cysteine) is attached at cysteine 22. The disordered stretch occupies residues 30–58; sequence NDGSEGMLGAGTGMDANGGNGNMSSEEQA. The span at 35–50 shows a compositional bias: gly residues; it reads GMLGAGTGMDANGGNG. One can recognise an OmpA-like domain in the interval 60-173; it reads LQMQQLQQNN…SKNRRAVLVY (114 aa).

The protein belongs to the Pal lipoprotein family. The Tol-Pal system is composed of five core proteins: the inner membrane proteins TolA, TolQ and TolR, the periplasmic protein TolB and the outer membrane protein Pal. They form a network linking the inner and outer membranes and the peptidoglycan layer.

It is found in the cell outer membrane. Functionally, part of the Tol-Pal system, which plays a role in outer membrane invagination during cell division and is important for maintaining outer membrane integrity. This Escherichia coli O157:H7 protein is Peptidoglycan-associated lipoprotein.